The primary structure comprises 200 residues: Probable GTP-binding protein EngB (200 aa).

In terms of domain architecture, EngB-type G spans 23–197 (KNSEVVFIGR…RERVLKDVLG (175 aa)). GTP-binding positions include 31 to 38 (GRSNVGKS), 58 to 62 (GKTQL), 83 to 86 (DLPG), 153 to 156 (TKMD), and 175 to 177 (FTA). Mg(2+)-binding residues include Ser38 and Thr60.

Belongs to the TRAFAC class TrmE-Era-EngA-EngB-Septin-like GTPase superfamily. EngB GTPase family. Mg(2+) is required as a cofactor.

Functionally, necessary for normal cell division and for the maintenance of normal septation. The polypeptide is Probable GTP-binding protein EngB (Wolinella succinogenes (strain ATCC 29543 / DSM 1740 / CCUG 13145 / JCM 31913 / LMG 7466 / NCTC 11488 / FDC 602W) (Vibrio succinogenes)).